The chain runs to 338 residues: MNVFYDKDADLSLIKGKQVTIIGYGSQGHAHALNLKDSGVNVTVGLRKDGASWSKAENAGLSVKEVAEAVKGADVVMMLLPDEQIADVYAKEVHANIKQGAALAFAHGFNVHYGQVIPRADLDVIMIAPKAPGHTVRGTYSQGGGVPHLIAVAQNKSGAARDIALSYAAANGGGRAGIIETNFREETETDLFGEQAVLCGGTVELIKAGFETLVEAGYAPEMAYFECLHELKLIVDLIYEGGIANMNYSISNNAEYGEYVTGPRVVTEETKKAMKQCLTDIQTGEYAKSFILENKAGAPTLQSRRRLTAEHQIEQVGAKLRAMMPWIAKNKLVDQTKN.

Residues 1 to 181 (MNVFYDKDAD…GGGRAGIIET (181 aa)) enclose the KARI N-terminal Rossmann domain. NADP(+) contacts are provided by residues 24-27 (YGSQ), Arg-47, and Ser-52. His-107 is a catalytic residue. Gly-133 is an NADP(+) binding site. Residues 182-327 (NFREETETDL…AKLRAMMPWI (146 aa)) form the KARI C-terminal knotted domain. Residues Asp-190, Glu-194, Glu-226, and Glu-230 each coordinate Mg(2+). Position 251 (Ser-251) interacts with substrate.

It belongs to the ketol-acid reductoisomerase family. The cofactor is Mg(2+).

It catalyses the reaction (2R)-2,3-dihydroxy-3-methylbutanoate + NADP(+) = (2S)-2-acetolactate + NADPH + H(+). It carries out the reaction (2R,3R)-2,3-dihydroxy-3-methylpentanoate + NADP(+) = (S)-2-ethyl-2-hydroxy-3-oxobutanoate + NADPH + H(+). It functions in the pathway amino-acid biosynthesis; L-isoleucine biosynthesis; L-isoleucine from 2-oxobutanoate: step 2/4. Its pathway is amino-acid biosynthesis; L-valine biosynthesis; L-valine from pyruvate: step 2/4. In terms of biological role, involved in the biosynthesis of branched-chain amino acids (BCAA). Catalyzes an alkyl-migration followed by a ketol-acid reduction of (S)-2-acetolactate (S2AL) to yield (R)-2,3-dihydroxy-isovalerate. In the isomerase reaction, S2AL is rearranged via a Mg-dependent methyl migration to produce 3-hydroxy-3-methyl-2-ketobutyrate (HMKB). In the reductase reaction, this 2-ketoacid undergoes a metal-dependent reduction by NADPH to yield (R)-2,3-dihydroxy-isovalerate. The sequence is that of Ketol-acid reductoisomerase (NADP(+)) from Burkholderia ambifaria (strain MC40-6).